A 180-amino-acid polypeptide reads, in one-letter code: UPF0149 protein XCV3523 (180 aa).

It belongs to the UPF0149 family.

The protein is UPF0149 protein XCV3523 of Xanthomonas euvesicatoria pv. vesicatoria (strain 85-10) (Xanthomonas campestris pv. vesicatoria).